The sequence spans 405 residues: Tryptophan synthase beta chain (405 aa).

At Lys98 the chain carries N6-(pyridoxal phosphate)lysine.

This sequence belongs to the TrpB family. Tetramer of two alpha and two beta chains. Pyridoxal 5'-phosphate serves as cofactor.

The enzyme catalyses (1S,2R)-1-C-(indol-3-yl)glycerol 3-phosphate + L-serine = D-glyceraldehyde 3-phosphate + L-tryptophan + H2O. It participates in amino-acid biosynthesis; L-tryptophan biosynthesis; L-tryptophan from chorismate: step 5/5. Its function is as follows. The beta subunit is responsible for the synthesis of L-tryptophan from indole and L-serine. The chain is Tryptophan synthase beta chain from Bradyrhizobium diazoefficiens (strain JCM 10833 / BCRC 13528 / IAM 13628 / NBRC 14792 / USDA 110).